The sequence spans 82 residues: UPF0410 protein YeaQ (82 aa).

Helical transmembrane passes span 26–46 (GGGF…GGWI) and 57–77 (GFNF…LFIY).

It belongs to the UPF0410 family.

The protein resides in the cell inner membrane. This Escherichia coli O157:H7 protein is UPF0410 protein YeaQ (yeaQ).